A 335-amino-acid polypeptide reads, in one-letter code: Zinc-type alcohol dehydrogenase-like protein SAV2186 (335 aa).

Belongs to the zinc-containing alcohol dehydrogenase family. Quinone oxidoreductase subfamily.

The polypeptide is Zinc-type alcohol dehydrogenase-like protein SAV2186 (Staphylococcus aureus (strain Mu50 / ATCC 700699)).